We begin with the raw amino-acid sequence, 478 residues long: GMP reductase (478 aa).

CBS domains follow at residues 95 to 152 and 153 to 211; these read VVDT…VRDI and ALSD…AVDA. Residues 245–247 and 295–297 contribute to the NADP(+) site; these read DTA and GVG. The active-site Thioimidate intermediate is Cys302.

It belongs to the IMPDH/GMPR family. GuaB1 subfamily. Homooctamer composed of two tetramers. The oligomerization state is regulated by ligands and pH. Requires a monovalent cation as cofactor.

The enzyme catalyses IMP + NH4(+) + NADP(+) = GMP + NADPH + 2 H(+). Its pathway is purine metabolism; IMP biosynthesis via salvage pathway. Its activity is regulated as follows. Activity is allosterically regulated by the ATP/GTP ratio in a pH-dependent manner. At pH 7.8, GTP has only a minor positive effect and ATP only a minor negative effect on the activity, however, at lower pH values, the effects of ATP and GTP increase. ATP-dependent inhibition can be restored by increasing GTP concentration. IMP and XMP are competitive inhibitors. Involved in the purine-salvage pathway. Catalyzes the NADPH-dependent conversion of GMP to IMP. Is not essential for viability, but may contribute to the regulation of the purine nucleotide pool by recycling GMP to IMP. This chain is GMP reductase, found in Mycolicibacterium smegmatis (strain ATCC 700084 / mc(2)155) (Mycobacterium smegmatis).